A 261-amino-acid chain; its full sequence is Ribonuclease PH (261 aa).

Phosphate is bound by residues Arg-87 and 125-127; that span reads GTR.

Belongs to the RNase PH family. Homohexameric ring arranged as a trimer of dimers.

It carries out the reaction tRNA(n+1) + phosphate = tRNA(n) + a ribonucleoside 5'-diphosphate. Phosphorolytic 3'-5' exoribonuclease that plays an important role in tRNA 3'-end maturation. Removes nucleotide residues following the 3'-CCA terminus of tRNAs; can also add nucleotides to the ends of RNA molecules by using nucleoside diphosphates as substrates, but this may not be physiologically important. Probably plays a role in initiation of 16S rRNA degradation (leading to ribosome degradation) during starvation. This Thermoanaerobacter pseudethanolicus (strain ATCC 33223 / 39E) (Clostridium thermohydrosulfuricum) protein is Ribonuclease PH.